Here is a 361-residue protein sequence, read N- to C-terminus: MNQFTPQPGIMDIALYQGGKAHVDGVANVIKLSSNENPLGPSPAAVEAIRATAAQAHRYPSTDHAELRAAIGAVHGLDPDRIICGVGSDEVLQFVAQAYTGPGDEVIHTEHGFSMYPILARMAGATPVQVPERQRVVDVDAILAAVNDRTRLVFLANPANPTGTMISEAEVTRLADGLPGHVLLVLDGAYAEFVEGFDGGAALVSARDNVIMTRTFSKIYGLGGLRIGWGYAPREIIDVLNRIRQPFNLSTMQLAAAEAAVRDQDWVARCRDQNTTWRTWLAARLAELGVPSDVSCANFILARFADQGEAEACDLFLQSRGLIVRRVAGYNLPQALRITVGDEAGCRAVVDAVRAFKEARA.

Lys-218 bears the N6-(pyridoxal phosphate)lysine mark.

Belongs to the class-II pyridoxal-phosphate-dependent aminotransferase family. Histidinol-phosphate aminotransferase subfamily. In terms of assembly, homodimer. Pyridoxal 5'-phosphate is required as a cofactor.

It carries out the reaction L-histidinol phosphate + 2-oxoglutarate = 3-(imidazol-4-yl)-2-oxopropyl phosphate + L-glutamate. It functions in the pathway amino-acid biosynthesis; L-histidine biosynthesis; L-histidine from 5-phospho-alpha-D-ribose 1-diphosphate: step 7/9. This chain is Histidinol-phosphate aminotransferase, found in Ruegeria pomeroyi (strain ATCC 700808 / DSM 15171 / DSS-3) (Silicibacter pomeroyi).